The sequence spans 519 residues: MTPMTVLISILLTLLGLVVGYYVRKTIAEAKIAGARGAAEQILEDAKRDAEALKKEALLEAKDEIHTLRIDAEQEVRERRNELQKQENRLLQKEENLDRKHEGIDKREAMLEKKDHSLNERQQHIEEMESKVDEMIRMQQSELERISSLTRDEAKQIILDRVENELSHDIAIMTKETENRAKEEADKKAKNILSLALQRCAADHVAETTVSVVNLPNDEMKGRIIGREGRNIRTLETLTGIDLIIDDTPEAVILSGFDPIRRETARIALDKLVQDGRIHPARIEEMVEKSRREVDDYIREMGEQTTFEVGVHGLHPDLIKILGRLKFRTSYGQNVLKHSMEVAFLAGLMASELGEDAKLAKRAGLLHDIGKAIDHEVEGSHVEIGVELATKYKEHPVVINSIASHHGDEEPTSIIAVLVAAADALSAARPGARSETLENYIRRLEKLEEISESYEGVEKSFAIQAGREVRIMVKPDSINDLEAHRLARDIRKRIEDELDYPGHIKVTVIRETRAVEYAK.

A helical transmembrane segment spans residues 3-23 (PMTVLISILLTLLGLVVGYYV). The 64-residue stretch at 209 to 272 (TVSVVNLPND…ETARIALDKL (64 aa)) folds into the KH domain. Residues 335–428 (VLKHSMEVAF…VAAADALSAA (94 aa)) form the HD domain.

The protein belongs to the RNase Y family.

It localises to the cell membrane. Endoribonuclease that initiates mRNA decay. The polypeptide is Ribonuclease Y (Bacillus velezensis (strain DSM 23117 / BGSC 10A6 / LMG 26770 / FZB42) (Bacillus amyloliquefaciens subsp. plantarum)).